A 293-amino-acid polypeptide reads, in one-letter code: Probable endoribonuclease YicC (293 aa).

This sequence belongs to the YicC/YloC family. A divalent metal cation is required as a cofactor.

In terms of biological role, negatively modulates sporulation, probably in response to nutrient conditions. Effects expression of sporulation regulator spo0A in an indirect manner, possibly via repression of the sinRR' operon. Its function is as follows. Probably a ssRNA endonuclease. Functionally, might contribute to small RNA (sRNA) regulation. This is Probable endoribonuclease YicC from Clostridioides difficile (strain 630) (Peptoclostridium difficile).